A 135-amino-acid polypeptide reads, in one-letter code: Crossover junction endodeoxyribonuclease Hje (135 aa).

The Mg(2+) site is built by E10, D39, and E52.

This sequence belongs to the Holliday junction resolvase Hjc family. Hje subfamily. As to quaternary structure, homodimer. It depends on Mg(2+) as a cofactor.

It carries out the reaction Endonucleolytic cleavage at a junction such as a reciprocal single-stranded crossover between two homologous DNA duplexes (Holliday junction).. Its function is as follows. A structure-specific endonuclease that resolves Holliday junction (HJ) intermediates during genetic recombination. Acts only on 4-way DNA junctions in a sequence non-specific manner; introduces paired nicks in opposing strands 2 bases 3' of the point of strand exchange only on continuous strands of 4-way junction DNA. Cleaves both mobile and immobile junctions. Plays a more direct role in DNA repair than Hjc. Overexpression of this protein decreases the growth rate, and leads to genomic instability, and global transcriptomic changes. This Saccharolobus islandicus (strain REY15A) (Sulfolobus islandicus) protein is Crossover junction endodeoxyribonuclease Hje.